A 1887-amino-acid chain; its full sequence is Nuclear pore membrane glycoprotein 210 (1887 aa).

An N-terminal signal peptide occupies residues 1–26 (MAARGRGLLLLTLSVLLAAGPSAAAA). Topologically, residues 27–1808 (KLNIPKVLLP…LFQHFLDSYQ (1782 aa)) are perinuclear space. Asn44, Asn337, Asn405, Asn484, Asn681, Asn801, Asn926, Asn1039, Asn1116, Asn1135, Asn1362, and Asn1441 each carry an N-linked (GlcNAc...) asparagine glycan. The BIG2 domain occupies 1078–1151 (FPPFRLMPRK…VQAVDAETGK (74 aa)). The chain crosses the membrane as a helical span at residues 1809–1829 (VMFFTLFALLAGTAVMIIAYH). The Cytoplasmic segment spans residues 1830-1887 (TVCTPRDLAVPAALTPRASPGHSPHYFAASSPTSPNALPPARKASPPSGLWSPAYASH). Thr1844 bears the Phosphothreonine mark. The segment at 1853–1887 (PHYFAASSPTSPNALPPARKASPPSGLWSPAYASH) is disordered. Ser1874, Ser1877, Ser1881, and Ser1886 each carry phosphoserine.

Belongs to the NUP210 family. As to quaternary structure, forms dimers and possibly higher-order oligomers. N-glycosylated, but not all potential glycosylation sites may be used. Contains high-mannose type oligosaccharides. In terms of processing, phosphorylated at Ser-1881 in mitosis specifically; not phosphorylated in interphase. Ubiquitous expression, with highest levels in lung, liver, pancreas, testis, and ovary, intermediate levels in brain, kidney, and spleen, and lowest levels in heart and skeletal muscle.

Its subcellular location is the nucleus. The protein resides in the nuclear pore complex. It localises to the nucleus membrane. It is found in the endoplasmic reticulum membrane. Nucleoporin essential for nuclear pore assembly and fusion, nuclear pore spacing, as well as structural integrity. This is Nuclear pore membrane glycoprotein 210 (NUP210) from Homo sapiens (Human).